A 240-amino-acid chain; its full sequence is Probable transcriptional regulatory protein Hac_0344 (240 aa).

The protein belongs to the TACO1 family.

It is found in the cytoplasm. This is Probable transcriptional regulatory protein Hac_0344 from Helicobacter acinonychis (strain Sheeba).